Consider the following 744-residue polypeptide: Adenosylcobalamin-dependent ribonucleoside-triphosphate reductase (744 aa).

Cys120 and Cys424 are joined by a disulfide. Residues 148-159 (SMPFSFLFDQLM) form an effector region-1 region. Positions 169 to 318 (VNSNIKQIPK…ICNLIGKTVV (150 aa)) are effector region-2. Catalysis depends on residues Cys413 and Glu415. The adenosylcobalamin-binding-1 stretch occupies residues 570–631 (FHYAGYLIQR…SKNFASAGTV (62 aa)). The tract at residues 690 to 729 (LKQAPKEPINKKTYEERAALITDDVEEVFTKQNDDQKGLE) is adenosylcobalamin-binding-2.

This sequence belongs to the class II ribonucleoside-triphosphate reductase family. In terms of assembly, monomer. Requires adenosylcob(III)alamin as cofactor.

It carries out the reaction a 2'-deoxyribonucleoside 5'-triphosphate + [thioredoxin]-disulfide + H2O = a ribonucleoside 5'-triphosphate + [thioredoxin]-dithiol. With respect to regulation, allosterically regulated by ATP and dNTP. The sequence is that of Adenosylcobalamin-dependent ribonucleoside-triphosphate reductase (rtpR) from Lactobacillus acidophilus (strain ATCC 700396 / NCK56 / N2 / NCFM).